The chain runs to 1452 residues: Pleiotropic drug resistance protein 1 (1452 aa).

An ABC transporter 1 domain is found at 152–425 (LNYLHILPNR…FEYMGFICPE (274 aa)). Position 185 to 192 (185 to 192 (GPPSSGKT)) interacts with ATP. The ABC transmembrane type-2 1 domain occupies 504-716 (LLKACTAREY…AQNAIAVNEF (213 aa)). A run of 7 helical transmembrane segments spans residues 521–541 (FVYI…MTLF), 554–574 (GAVF…NGFS), 609–629 (IPIT…VIGF), 640–660 (LLLL…MGAL), 664–684 (IIVA…MGGF), 694–714 (WWIW…IAVN), and 753–773 (IGAG…AVAL). The disordered stretch occupies residues 808–830 (LGKSSSEKGNDVRRSASSRSMSS). Positions 812-821 (SSEKGNDVRR) are enriched in basic and acidic residues. The 253-residue stretch at 855 to 1107 (ITFDDIRYAV…HLIKYFEGID (253 aa)) folds into the ABC transporter 2 domain. Residue 900-907 (GVSGAGKT) coordinates ATP. One can recognise an ABC transmembrane type-2 2 domain in the interval 1180-1394 (TQCMACFWKQ…TLYGLIASQF (215 aa)). 7 consecutive transmembrane segments (helical) span residues 1199–1219 (YTAV…TIFW), 1239–1259 (YIAV…VIAI), 1287–1307 (LPYL…MIGF), 1314–1334 (FFWY…YGMM), 1344–1364 (IAAI…GFIV), 1375–1395 (WYYY…SQFG), and 1421–1441 (FVGY…FIFA).

The protein belongs to the ABC transporter superfamily. ABCG family. PDR (TC 3.A.1.205) subfamily. In terms of tissue distribution, expressed in root hypodermal passage cells. Expressed in stem tissues, particularly the vasculature and nodes adjacent to leaf axils.

The protein localises to the cell membrane. Its function is as follows. Cellular strigolactone (SL) transporter required for the exudation of SL from the root to the soil. The presence of SL in the vicinity of the roots is required for development of symbiotic interactions with arbuscular mycorrhizal fungi (AMF). Transports SL in the above ground tissues and is required for the control of shoot branching. SL regulates plant shoot architecture by inhibiting the outgrowth of axillary buds. Involved in the regulation of shootward and outward directional strigolactone transport in roots. Due to its polar localization in root cells, mediates directional shootward strigolactone transport, as well as localized outward directional transport for exudation to the soil. The protein is Pleiotropic drug resistance protein 1 of Petunia axillaris (Large white petunia).